Reading from the N-terminus, the 164-residue chain is UPF0114 protein KPN78578_33570 (164 aa).

4 helical membrane-spanning segments follow: residues 15–35 (LLAP…IKFF), 53–73 (MILT…LVMV), 109–126 (VAAS…RVFM), and 136–156 (LMWY…MGYL).

This sequence belongs to the UPF0114 family.

Its subcellular location is the cell membrane. This Klebsiella pneumoniae subsp. pneumoniae (strain ATCC 700721 / MGH 78578) protein is UPF0114 protein KPN78578_33570.